An 80-amino-acid chain; its full sequence is Putative defensin-like protein 23 (80 aa).

The N-terminal stretch at 1 to 25 (MTTTMKIMSFAMLLVLLFSIDVVEG) is a signal peptide. 4 disulfides stabilise this stretch: Cys-31–Cys-80, Cys-41–Cys-66, Cys-50–Cys-76, and Cys-54–Cys-78.

This sequence belongs to the DEFL family.

The protein resides in the secreted. The polypeptide is Putative defensin-like protein 23 (Arabidopsis thaliana (Mouse-ear cress)).